Here is a 116-residue protein sequence, read N- to C-terminus: Large ribosomal subunit protein eL31 (116 aa).

The protein belongs to the eukaryotic ribosomal protein eL31 family.

The polypeptide is Large ribosomal subunit protein eL31 (RPL31) (Chlamydomonas reinhardtii (Chlamydomonas smithii)).